Reading from the N-terminus, the 642-residue chain is Threonine--tRNA ligase (642 aa).

A TGS domain is found at 1 to 61; it reads MPVITLPDGS…DTDAQLAIIT (61 aa). The catalytic stretch occupies residues 243–534; sequence DHRKIGKQLD…LTEEFAGFFP (292 aa). Zn(2+) contacts are provided by Cys-334, His-385, and His-511.

Belongs to the class-II aminoacyl-tRNA synthetase family. In terms of assembly, homodimer. It depends on Zn(2+) as a cofactor.

The protein resides in the cytoplasm. It carries out the reaction tRNA(Thr) + L-threonine + ATP = L-threonyl-tRNA(Thr) + AMP + diphosphate + H(+). Catalyzes the attachment of threonine to tRNA(Thr) in a two-step reaction: L-threonine is first activated by ATP to form Thr-AMP and then transferred to the acceptor end of tRNA(Thr). Also edits incorrectly charged L-seryl-tRNA(Thr). This Pectobacterium carotovorum subsp. carotovorum (strain PC1) protein is Threonine--tRNA ligase.